A 158-amino-acid polypeptide reads, in one-letter code: Protein Smg homolog (158 aa).

Belongs to the Smg family.

In Vibrio atlanticus (strain LGP32) (Vibrio splendidus (strain Mel32)), this protein is Protein Smg homolog.